The primary structure comprises 269 residues: Tryptophan synthase alpha chain (269 aa).

Active-site proton acceptor residues include Glu-49 and Asp-60.

The protein belongs to the TrpA family. In terms of assembly, tetramer of two alpha and two beta chains.

The catalysed reaction is (1S,2R)-1-C-(indol-3-yl)glycerol 3-phosphate + L-serine = D-glyceraldehyde 3-phosphate + L-tryptophan + H2O. The protein operates within amino-acid biosynthesis; L-tryptophan biosynthesis; L-tryptophan from chorismate: step 5/5. The alpha subunit is responsible for the aldol cleavage of indoleglycerol phosphate to indole and glyceraldehyde 3-phosphate. This Buchnera aphidicola subsp. Schlechtendalia chinensis protein is Tryptophan synthase alpha chain.